The primary structure comprises 271 residues: 4-hydroxy-tetrahydrodipicolinate reductase (271 aa).

10–15 (GAAGRM) lines the NAD(+) pocket. Residue R37 participates in NADP(+) binding. NAD(+) is bound by residues 100-102 (GTT) and 124-127 (SGNM). Catalysis depends on H157, which acts as the Proton donor/acceptor. H158 is a (S)-2,3,4,5-tetrahydrodipicolinate binding site. Residue K161 is the Proton donor of the active site. 167–168 (GT) contacts (S)-2,3,4,5-tetrahydrodipicolinate. The tract at residues 183 to 202 (SLSEHEQRGRDGHTGPRKDG) is disordered. The segment covering 185-202 (SEHEQRGRDGHTGPRKDG) has biased composition (basic and acidic residues).

This sequence belongs to the DapB family.

It localises to the cytoplasm. It carries out the reaction (S)-2,3,4,5-tetrahydrodipicolinate + NAD(+) + H2O = (2S,4S)-4-hydroxy-2,3,4,5-tetrahydrodipicolinate + NADH + H(+). It catalyses the reaction (S)-2,3,4,5-tetrahydrodipicolinate + NADP(+) + H2O = (2S,4S)-4-hydroxy-2,3,4,5-tetrahydrodipicolinate + NADPH + H(+). It participates in amino-acid biosynthesis; L-lysine biosynthesis via DAP pathway; (S)-tetrahydrodipicolinate from L-aspartate: step 4/4. Catalyzes the conversion of 4-hydroxy-tetrahydrodipicolinate (HTPA) to tetrahydrodipicolinate. This chain is 4-hydroxy-tetrahydrodipicolinate reductase, found in Beijerinckia indica subsp. indica (strain ATCC 9039 / DSM 1715 / NCIMB 8712).